The sequence spans 160 residues: MRIGLFAVGRLKAGPEKDLAVRYLDRFAKTGPAVGLELARVAEMVESRAANAETRKREEAVQLEKALVDGSLLVLLDERGKALDSEAFANLLATFRDSGKRDLMIAIGGADGLDPALHARADAVLCLGKMTWPHQLVRILIAEQLYRAVTILSGHPYHRA.

Residues Leu-76, Gly-108, and 127 to 132 (LGKMTW) contribute to the S-adenosyl-L-methionine site.

The protein belongs to the RNA methyltransferase RlmH family. Homodimer.

The protein resides in the cytoplasm. The enzyme catalyses pseudouridine(1915) in 23S rRNA + S-adenosyl-L-methionine = N(3)-methylpseudouridine(1915) in 23S rRNA + S-adenosyl-L-homocysteine + H(+). Functionally, specifically methylates the pseudouridine at position 1915 (m3Psi1915) in 23S rRNA. This Sinorhizobium medicae (strain WSM419) (Ensifer medicae) protein is Ribosomal RNA large subunit methyltransferase H.